Consider the following 585-residue polypeptide: Archaeosine synthase (585 aa).

Positions 516–584 (TKTVEIDGFV…IGVEIRHVEE (69 aa)) constitute a PUA domain.

It belongs to the archaeosine synthase type 1 family. Homodimer.

The catalysed reaction is 7-cyano-7-carbaguanosine(15) in tRNA + L-glutamine + H2O = archaeosine(15) in tRNA + L-glutamate. The protein operates within tRNA modification; archaeosine-tRNA biosynthesis. Functionally, is responsible for the final step in the biosynthesis of archaeosine, a modified nucleoside present in the dihydrouridine loop (D-loop) of archaeal tRNA. Catalyzes the conversion of 7-cyano-7-deazaguanine (preQ0)-modified tRNA to archaeosine-tRNA, transforming a nitrile group to a formamidine group. The sequence is that of Archaeosine synthase from Haloferax volcanii (strain ATCC 29605 / DSM 3757 / JCM 8879 / NBRC 14742 / NCIMB 2012 / VKM B-1768 / DS2) (Halobacterium volcanii).